The primary structure comprises 355 residues: Protein RecA (355 aa).

74–81 is a binding site for ATP; sequence GPESSGKT.

Belongs to the RecA family.

It localises to the cytoplasm. Functionally, can catalyze the hydrolysis of ATP in the presence of single-stranded DNA, the ATP-dependent uptake of single-stranded DNA by duplex DNA, and the ATP-dependent hybridization of homologous single-stranded DNAs. It interacts with LexA causing its activation and leading to its autocatalytic cleavage. The protein is Protein RecA of Cytophaga hutchinsonii (strain ATCC 33406 / DSM 1761 / CIP 103989 / NBRC 15051 / NCIMB 9469 / D465).